We begin with the raw amino-acid sequence, 428 residues long: Immunoglobulin superfamily member 11 (428 aa).

An N-terminal signal peptide occupies residues 1 to 22; sequence MTRRRSALASWLLLSLLGVAAS. Residues 23–136 enclose the Ig-like V-type domain; that stretch reads LEVSESPGSV…DRGGRNIGVT (114 aa). Topologically, residues 23 to 239 are extracellular; it reads LEVSESPGSV…LQVISPQPRS (217 aa). Intrachain disulfides connect Cys-44–Cys-120 and Cys-165–Cys-215. Asn-102 carries an N-linked (GlcNAc...) asparagine glycan. Residues 144–234 enclose the Ig-like C2-type domain; it reads PSAPNCQIQG…TCLLDLQVIS (91 aa). Residues 240-260 traverse the membrane as a helical segment; sequence VGVIAGAVGTGAVLIVICLAL. Residues 261–428 are Cytoplasmic-facing; the sequence is TSGAFFYWRS…PAQSRAGSLV (168 aa). Residue Arg-375 is modified to Omega-N-methylarginine.

In terms of processing, N-glycosylated.

It is found in the cell membrane. In terms of biological role, functions as a cell adhesion molecule through homophilic interaction. Stimulates cell growth. This Rattus norvegicus (Rat) protein is Immunoglobulin superfamily member 11 (Igsf11).